The primary structure comprises 89 residues: Small ribosomal subunit protein bS20 (89 aa).

Belongs to the bacterial ribosomal protein bS20 family.

Its function is as follows. Binds directly to 16S ribosomal RNA. This is Small ribosomal subunit protein bS20 from Stenotrophomonas maltophilia (strain R551-3).